A 360-amino-acid chain; its full sequence is Peptide chain release factor 1 (360 aa).

The residue at position 233 (Gln233) is an N5-methylglutamine. Residues 283–305 form a disordered region; the sequence is KLDAERAADRRSQVGSGDRSERI.

This sequence belongs to the prokaryotic/mitochondrial release factor family. Methylated by PrmC. Methylation increases the termination efficiency of RF1.

It is found in the cytoplasm. In terms of biological role, peptide chain release factor 1 directs the termination of translation in response to the peptide chain termination codons UAG and UAA. The protein is Peptide chain release factor 1 of Methylocella silvestris (strain DSM 15510 / CIP 108128 / LMG 27833 / NCIMB 13906 / BL2).